The primary structure comprises 482 residues: ATP synthase subunit beta (482 aa).

161–168 (GGAGVGKT) serves as a coordination point for ATP.

This sequence belongs to the ATPase alpha/beta chains family. As to quaternary structure, F-type ATPases have 2 components, CF(1) - the catalytic core - and CF(0) - the membrane proton channel. CF(1) has five subunits: alpha(3), beta(3), gamma(1), delta(1), epsilon(1). CF(0) has four main subunits: a(1), b(1), b'(1) and c(9-12).

The protein resides in the cellular thylakoid membrane. It carries out the reaction ATP + H2O + 4 H(+)(in) = ADP + phosphate + 5 H(+)(out). Functionally, produces ATP from ADP in the presence of a proton gradient across the membrane. The catalytic sites are hosted primarily by the beta subunits. In Gloeothece citriformis (strain PCC 7424) (Cyanothece sp. (strain PCC 7424)), this protein is ATP synthase subunit beta.